We begin with the raw amino-acid sequence, 122 residues long: Transcription initiation factor IIA subunit 2 (122 aa).

Ser95 and Ser102 each carry phosphoserine.

This sequence belongs to the TFIIA subunit 2 family. TFIIA is a heterodimer composed of the large TOA1 and a small TOA2 subunits. Interacts with TBP. Interacts with TAF11. Interacts with KAP122.

It is found in the cytoplasm. It localises to the nucleus. TFIIA is a component of the transcription machinery of RNA polymerase II and plays an important role in transcriptional activation. TFIIA in a complex with TBP mediates transcriptional activity. This is Transcription initiation factor IIA subunit 2 (TOA2) from Saccharomyces cerevisiae (strain ATCC 204508 / S288c) (Baker's yeast).